We begin with the raw amino-acid sequence, 81 residues long: RNA-binding protein Hfq (81 aa).

Positions 10 to 69 constitute a Sm domain; sequence DPFLNTLRKEHIPVSIYLVNGIKLQGHIDSFDQYVVLLKNTVTQMVYKHAISTVVPARAV.

Belongs to the Hfq family. As to quaternary structure, homohexamer.

Its function is as follows. RNA chaperone that binds small regulatory RNA (sRNAs) and mRNAs to facilitate mRNA translational regulation in response to envelope stress, environmental stress and changes in metabolite concentrations. Also binds with high specificity to tRNAs. The sequence is that of RNA-binding protein Hfq from Nitrosospira multiformis (strain ATCC 25196 / NCIMB 11849 / C 71).